We begin with the raw amino-acid sequence, 223 residues long: RNA polymerase sigma-H factor (223 aa).

Positions 67–80 (DIVQEGMIGLYKSI) match the Polymerase core binding motif. The segment at residues 187 to 206 (YQEISEELNRHVKSIDNALQ) is a DNA-binding region (H-T-H motif).

Belongs to the sigma-70 factor family.

Sigma factors are initiation factors that promote the attachment of RNA polymerase to specific initiation sites and are then released. This sigma factor is involved in the transition to post-exponential phase in the beginning of sporulation. The chain is RNA polymerase sigma-H factor (sigH) from Bacillus licheniformis.